A 521-amino-acid polypeptide reads, in one-letter code: ATP synthase subunit beta (521 aa).

Low complexity-rich tracts occupy residues 1–21 (MAKA…AAKA) and 28–42 (PKTT…TKSG). The interval 1-42 (MAKAATPKTTAAAEAKPAAKAPAKKAAPKTTAAAKPAATKSG) is disordered. 199–206 (GGAGVGKT) contributes to the ATP binding site.

Belongs to the ATPase alpha/beta chains family. F-type ATPases have 2 components, CF(1) - the catalytic core - and CF(0) - the membrane proton channel. CF(1) has five subunits: alpha(3), beta(3), gamma(1), delta(1), epsilon(1). CF(0) has three main subunits: a(1), b(2) and c(9-12). The alpha and beta chains form an alternating ring which encloses part of the gamma chain. CF(1) is attached to CF(0) by a central stalk formed by the gamma and epsilon chains, while a peripheral stalk is formed by the delta and b chains.

Its subcellular location is the cell inner membrane. The enzyme catalyses ATP + H2O + 4 H(+)(in) = ADP + phosphate + 5 H(+)(out). Functionally, produces ATP from ADP in the presence of a proton gradient across the membrane. The catalytic sites are hosted primarily by the beta subunits. In Brucella abortus (strain 2308), this protein is ATP synthase subunit beta.